The primary structure comprises 899 residues: Solute carrier family 12 member 9 (899 aa).

The Cytoplasmic portion of the chain corresponds to 1–42 (MANEHSPLLVHGVYSMMGNAEDSRGGSAGTGEASNPKTDPRK). A helical transmembrane segment spans residues 43–63 (LNTFFGVMVPTILSMFSIVLF). Residues 64-78 (LRTGFVVGHAGLLHG) lie on the Extracellular side of the membrane. The helical transmembrane segment at 79 to 99 (LLMLFVAYFIISLTILSICAI) threads the bilayer. Topologically, residues 100–125 (STNGAVEGGGAYFMISRSLGPEFGGS) are cytoplasmic. The helical transmembrane segment at 126–146 (IGLMFYLAKVCACGVYVLGLV) threads the bilayer. Topologically, residues 147 to 175 (EAIMDVFGQDPGSSVAQGLRVLPQGYWYT) are extracellular. The helical transmembrane segment at 176 to 196 (VLYSSVVLLLCMLVCLVGAHI) threads the bilayer. The Cytoplasmic segment spans residues 197-201 (YAKAS). A helical membrane pass occupies residues 202 to 222 (FLILLVVTVSLISIIISPLIV). Over 223-269 (SPQGFNITHTYGNNHSVTVSPSYTGFNSTTLKNNLGPRYSLDYSTNT) the chain is Extracellular. N-linked (GlcNAc...) asparagine glycans are attached at residues Asn228, Asn236, and Asn249. Residues 270–290 (MMSFATVFAVMFTSCTGIMAG) traverse the membrane as a helical segment. Topologically, residues 291-306 (ANMSGELKNPSESIPK) are cytoplasmic. The helical transmembrane segment at 307–327 (GTIMAVAYTFTVYVLLYLLLS) threads the bilayer. At 328–350 (STCDRSLLLNDYAVFQRVNVWPP) the chain is on the extracellular side. Residues 351–371 (FVTIGVYCASLSAAMCSMIGA) traverse the membrane as a helical segment. Over 372 to 373 (SR) the chain is Cytoplasmic. Residues 374 to 394 (ILHALALDQLFGLPLAPAAVT) traverse the membrane as a helical segment. Residues 395 to 399 (SSSGN) are Extracellular-facing. The chain crosses the membrane as a helical span at residues 400–420 (PWVSVLYTWALVQCTLFAGQL). Asn421 is a topological domain (cytoplasmic). The chain crosses the membrane as a helical span at residues 422–442 (VIAGIVTVFYLLAYAAVDLAC). The Extracellular portion of the chain corresponds to 443 to 455 (LALEWASAPNFRP). A helical transmembrane segment spans residues 456-476 (TFQFFSWHTCLLGIISCVVMM). Residues 477 to 487 (FVINPVYSSAS) lie on the Extracellular side of the membrane. The chain crosses the membrane as a helical span at residues 488 to 510 (IVLLLLLLLFLHYRSPTSSWGYI). The Cytoplasmic segment spans residues 511 to 563 (SQALIFHQVRKYLLMLDSRKDHVKFWRPQVLLMVSNPRSSCQLICFVNQLKKG). The helical transmembrane segment at 564–584 (GLFVLGHVQIGDLDVLPADPV) threads the bilayer. The Extracellular segment spans residues 585–749 (QPQYNFWLSL…NLLTPGSASY (165 aa)). The helical transmembrane segment at 750 to 770 (ADVGSLFLLQMACVLNMASGW) threads the bilayer. Topologically, residues 771 to 899 (RRARLRIFVC…GVTPVTCTEL (129 aa)) are cytoplasmic.

The protein belongs to the SLC12A transporter family.

The protein resides in the cell membrane. It is found in the lysosome membrane. Functionally, seems to correspond to a subunit of a multimeric transport system and thus, additional subunits may be required for its function. May play a role in lysosomal ion flux and osmoregulation. In Danio rerio (Zebrafish), this protein is Solute carrier family 12 member 9 (slc12a9).